The primary structure comprises 183 residues: Holliday junction branch migration complex subunit RuvA (183 aa).

Positions 1-63 (MIVGLIGVVE…EDAHLLYGFL (63 aa)) are domain I. The interval 64 to 139 (EEGEKILFER…FFIQDENRPA (76 aa)) is domain II. Residue A139 is a region of interest, flexible linker. The tract at residues 139–183 (ARNEVFLALESLGFKSAEINQVLKTLKPNLSIEAAIKEALQQLRS) is domain III.

The protein belongs to the RuvA family. In terms of assembly, homotetramer. Forms an RuvA(8)-RuvB(12)-Holliday junction (HJ) complex. HJ DNA is sandwiched between 2 RuvA tetramers; dsDNA enters through RuvA and exits via RuvB. An RuvB hexamer assembles on each DNA strand where it exits the tetramer. Each RuvB hexamer is contacted by two RuvA subunits (via domain III) on 2 adjacent RuvB subunits; this complex drives branch migration. In the full resolvosome a probable DNA-RuvA(4)-RuvB(12)-RuvC(2) complex forms which resolves the HJ.

It is found in the cytoplasm. The RuvA-RuvB-RuvC complex processes Holliday junction (HJ) DNA during genetic recombination and DNA repair, while the RuvA-RuvB complex plays an important role in the rescue of blocked DNA replication forks via replication fork reversal (RFR). RuvA specifically binds to HJ cruciform DNA, conferring on it an open structure. The RuvB hexamer acts as an ATP-dependent pump, pulling dsDNA into and through the RuvAB complex. HJ branch migration allows RuvC to scan DNA until it finds its consensus sequence, where it cleaves and resolves the cruciform DNA. This is Holliday junction branch migration complex subunit RuvA from Helicobacter pylori (strain ATCC 700392 / 26695) (Campylobacter pylori).